The primary structure comprises 95 residues: Small ribosomal subunit protein uS17 (95 aa).

This sequence belongs to the universal ribosomal protein uS17 family. Part of the 30S ribosomal subunit.

In terms of biological role, one of the primary rRNA binding proteins, it binds specifically to the 5'-end of 16S ribosomal RNA. The polypeptide is Small ribosomal subunit protein uS17 (Mesomycoplasma hyopneumoniae (strain 7448) (Mycoplasma hyopneumoniae)).